A 142-amino-acid polypeptide reads, in one-letter code: Large ribosomal subunit protein uL13 (142 aa).

It belongs to the universal ribosomal protein uL13 family. Part of the 50S ribosomal subunit.

Its function is as follows. This protein is one of the early assembly proteins of the 50S ribosomal subunit, although it is not seen to bind rRNA by itself. It is important during the early stages of 50S assembly. This chain is Large ribosomal subunit protein uL13, found in Trichlorobacter lovleyi (strain ATCC BAA-1151 / DSM 17278 / SZ) (Geobacter lovleyi).